We begin with the raw amino-acid sequence, 36 residues long: Histone H1-like protein EM5 (36 aa).

The 36-residue stretch at 1–36 folds into the H15 domain; that stretch reads MITAAVGALKERGGSSRQAILKYIQANFKVQANPAA.

Belongs to the histone H1/H5 family. In terms of tissue distribution, sperm.

Its subcellular location is the nucleus. It localises to the chromosome. The sequence is that of Histone H1-like protein EM5 from Ensis minor (Razor shell).